We begin with the raw amino-acid sequence, 146 residues long: Large ribosomal subunit protein bL19 (146 aa).

Positions Asp119 to Glu146 are disordered.

It belongs to the bacterial ribosomal protein bL19 family.

This protein is located at the 30S-50S ribosomal subunit interface and may play a role in the structure and function of the aminoacyl-tRNA binding site. The sequence is that of Large ribosomal subunit protein bL19 from Bartonella tribocorum (strain CIP 105476 / IBS 506).